A 314-amino-acid chain; its full sequence is Olfactory receptor 1E1 (314 aa).

The Extracellular segment spans residues 1-25 (MMGQNQTSISDFLLLGLPIQPEQQN). Asparagine 5 carries N-linked (GlcNAc...) asparagine glycosylation. A helical membrane pass occupies residues 26–49 (LCYALFLAMYLTTLLGNLLIIVLI). Residues 50-57 (RLDSHLHT) are Cytoplasmic-facing. A helical membrane pass occupies residues 58–79 (PMYLFLSNLSFSDLCFSSVTIP). The Extracellular segment spans residues 80–100 (KLLQNMQNQDPSIPYADCLTQ). A helical transmembrane segment spans residues 101-120 (MYFFLLFGDLESFLLVAMAY). The Cytoplasmic segment spans residues 121-139 (DRYVAICFPLHYTAIMSPM). The chain crosses the membrane as a helical span at residues 140–158 (LCLALVALSWVLTTFHAML). Topologically, residues 159-195 (HTLLMARLCFCADNVIPHFFCDMSALLKLAFSDTRVN) are extracellular. Residues 196–219 (EWVIFIMGGLILVIPFLLILGSYA) traverse the membrane as a helical segment. At 220–236 (RIVSSILKVPSSKGICK) the chain is on the cytoplasmic side. A helical transmembrane segment spans residues 237–259 (AFSTCGSHLSVVSLFYGTVIGLY). Residues 260–272 (LCSSANSSTLKDT) are Extracellular-facing. Residues 273 to 292 (VMAMMYTVVTPMLNPFIYSL) form a helical membrane-spanning segment. Topologically, residues 293-314 (RNRDMKGALSRVIHQKKTFFSL) are cytoplasmic.

It belongs to the G-protein coupled receptor 1 family.

The protein resides in the cell membrane. Odorant receptor. This chain is Olfactory receptor 1E1 (OR1E1), found in Homo sapiens (Human).